We begin with the raw amino-acid sequence, 225 residues long: Phosphatidylserine decarboxylase proenzyme (225 aa).

The active-site Schiff-base intermediate with substrate; via pyruvic acid is Ser-188. Pyruvic acid (Ser); by autocatalysis is present on Ser-188.

This sequence belongs to the phosphatidylserine decarboxylase family. PSD-A subfamily. In terms of assembly, heterodimer of a large membrane-associated beta subunit and a small pyruvoyl-containing alpha subunit. It depends on pyruvate as a cofactor. Is synthesized initially as an inactive proenzyme. Formation of the active enzyme involves a self-maturation process in which the active site pyruvoyl group is generated from an internal serine residue via an autocatalytic post-translational modification. Two non-identical subunits are generated from the proenzyme in this reaction, and the pyruvate is formed at the N-terminus of the alpha chain, which is derived from the carboxyl end of the proenzyme. The post-translation cleavage follows an unusual pathway, termed non-hydrolytic serinolysis, in which the side chain hydroxyl group of the serine supplies its oxygen atom to form the C-terminus of the beta chain, while the remainder of the serine residue undergoes an oxidative deamination to produce ammonia and the pyruvoyl prosthetic group on the alpha chain.

Its subcellular location is the cell membrane. The enzyme catalyses a 1,2-diacyl-sn-glycero-3-phospho-L-serine + H(+) = a 1,2-diacyl-sn-glycero-3-phosphoethanolamine + CO2. The protein operates within phospholipid metabolism; phosphatidylethanolamine biosynthesis; phosphatidylethanolamine from CDP-diacylglycerol: step 2/2. In terms of biological role, catalyzes the formation of phosphatidylethanolamine (PtdEtn) from phosphatidylserine (PtdSer). This Parvibaculum lavamentivorans (strain DS-1 / DSM 13023 / NCIMB 13966) protein is Phosphatidylserine decarboxylase proenzyme.